The primary structure comprises 440 residues: Chromosomal replication initiator protein DnaA (440 aa).

Residues 1 to 69 (MKERILQEIK…VKVVLGNDAT (69 aa)) are domain I, interacts with DnaA modulators. Residues 69-96 (TFEITYEAFEPHSSYSEPLVKKRAVLLT) are domain II. The tract at residues 97-313 (PLNPDYTFEN…GAIIKLLVYK (217 aa)) is domain III, AAA+ region. ADP is bound by residues V108, N113, G140, L141, G142, K143, T144, H145, and R300. G140 contacts ATP. 3 residues coordinate ATP: G142, K143, and T144. Residue T144 coordinates Mg(2+). Positions 314-440 (ETTGKEVDLK…GEISRRALSG (127 aa)) are domain IV, binds dsDNA.

This sequence belongs to the DnaA family. In terms of assembly, oligomerizes as a right-handed, spiral filament on DNA at oriC.

The protein localises to the cytoplasm. Functionally, plays an essential role in the initiation and regulation of chromosomal replication. ATP-DnaA binds to the origin of replication (oriC) to initiate formation of the DNA replication initiation complex once per cell cycle. Binds the DnaA box (a 9 base pair repeat at the origin) and separates the double-stranded (ds)DNA. Forms a right-handed helical filament on oriC DNA; dsDNA binds to the exterior of the filament while single-stranded (ss)DNA is stabiized in the filament's interior. The ATP-DnaA-oriC complex binds and stabilizes one strand of the AT-rich DNA unwinding element (DUE), permitting loading of DNA polymerase. After initiation quickly degrades to an ADP-DnaA complex that is not apt for DNA replication. Binds acidic phospholipids. In terms of biological role, the DnaA box consensus is 5'-[ATC][AT]AC[CT]TACCA[CT][CTA]-3' in this bacterium. Mutagenesis of residues that line the central pore blocks dsDNA separation. This Thermotoga maritima (strain ATCC 43589 / DSM 3109 / JCM 10099 / NBRC 100826 / MSB8) protein is Chromosomal replication initiator protein DnaA.